A 143-amino-acid chain; its full sequence is EKC/KEOPS complex subunit LAGE3 (143 aa).

Residues 1 to 57 (MRDADADAGGGADGGDGRGGHSCRGGVDTAAAPAGGAPPAHAPGPGRDAASAARGSR) are disordered. Positions 30 to 55 (AAAPAGGAPPAHAPGPGRDAASAARG) are enriched in low complexity.

It belongs to the CTAG/PCC1 family. As to quaternary structure, component of the EKC/KEOPS complex composed of at least GON7, TP53RK, TPRKB, OSGEP and LAGE3; the whole complex dimerizes. In terms of tissue distribution, ubiquitous.

The protein resides in the cytoplasm. It localises to the nucleus. Its function is as follows. Component of the EKC/KEOPS complex that is required for the formation of a threonylcarbamoyl group on adenosine at position 37 (t(6)A37) in tRNAs that read codons beginning with adenine. The complex is probably involved in the transfer of the threonylcarbamoyl moiety of threonylcarbamoyl-AMP (TC-AMP) to the N6 group of A37. LAGE3 functions as a dimerization module for the complex. In Homo sapiens (Human), this protein is EKC/KEOPS complex subunit LAGE3.